The primary structure comprises 141 residues: 3-hydroxyacyl-[acyl-carrier-protein] dehydratase FabZ (141 aa).

Residue His-47 is part of the active site.

This sequence belongs to the thioester dehydratase family. FabZ subfamily.

It localises to the cytoplasm. The catalysed reaction is a (3R)-hydroxyacyl-[ACP] = a (2E)-enoyl-[ACP] + H2O. Its function is as follows. Involved in unsaturated fatty acids biosynthesis. Catalyzes the dehydration of short chain beta-hydroxyacyl-ACPs and long chain saturated and unsaturated beta-hydroxyacyl-ACPs. The chain is 3-hydroxyacyl-[acyl-carrier-protein] dehydratase FabZ from Caldanaerobacter subterraneus subsp. tengcongensis (strain DSM 15242 / JCM 11007 / NBRC 100824 / MB4) (Thermoanaerobacter tengcongensis).